A 130-amino-acid chain; its full sequence is Small ribosomal subunit protein uS9 (130 aa).

A disordered region spans residues 106-130 (RDSRKVERKKPGLKKARKASQFSKR). The span at 111 to 130 (VERKKPGLKKARKASQFSKR) shows a compositional bias: basic residues.

This sequence belongs to the universal ribosomal protein uS9 family.

This is Small ribosomal subunit protein uS9 from Streptococcus pneumoniae (strain ATCC 700669 / Spain 23F-1).